The following is a 361-amino-acid chain: Alanine racemase (361 aa).

The Proton acceptor; specific for D-alanine role is filled by K35. An N6-(pyridoxal phosphate)lysine modification is found at K35. R130 serves as a coordination point for substrate. Y257 serves as the catalytic Proton acceptor; specific for L-alanine. M305 is a substrate binding site.

It belongs to the alanine racemase family. The cofactor is pyridoxal 5'-phosphate.

It carries out the reaction L-alanine = D-alanine. The protein operates within amino-acid biosynthesis; D-alanine biosynthesis; D-alanine from L-alanine: step 1/1. Functionally, catalyzes the interconversion of L-alanine and D-alanine. May also act on other amino acids. This is Alanine racemase (alr) from Nitrosomonas eutropha (strain DSM 101675 / C91 / Nm57).